A 438-amino-acid chain; its full sequence is Enolase (438 aa).

Gln-174 provides a ligand contact to (2R)-2-phosphoglycerate. The active-site Proton donor is the Glu-216. Mg(2+)-binding residues include Asp-253, Glu-297, and Asp-324. The (2R)-2-phosphoglycerate site is built by Lys-349, Arg-378, Ser-379, and Lys-400. The active-site Proton acceptor is Lys-349.

It belongs to the enolase family. In terms of assembly, component of the RNA degradosome, a multiprotein complex involved in RNA processing and mRNA degradation. Mg(2+) serves as cofactor.

The protein resides in the cytoplasm. The protein localises to the secreted. It is found in the cell surface. It catalyses the reaction (2R)-2-phosphoglycerate = phosphoenolpyruvate + H2O. Its pathway is carbohydrate degradation; glycolysis; pyruvate from D-glyceraldehyde 3-phosphate: step 4/5. Its function is as follows. Catalyzes the reversible conversion of 2-phosphoglycerate (2-PG) into phosphoenolpyruvate (PEP). It is essential for the degradation of carbohydrates via glycolysis. The polypeptide is Enolase (Psychrobacter arcticus (strain DSM 17307 / VKM B-2377 / 273-4)).